The sequence spans 249 residues: DNA polymerase sliding clamp (249 aa).

It belongs to the PCNA family. In terms of assembly, homotrimer. The subunits circularize to form a toroid; DNA passes through its center. Replication factor C (RFC) is required to load the toroid on the DNA.

In terms of biological role, sliding clamp subunit that acts as a moving platform for DNA processing. Responsible for tethering the catalytic subunit of DNA polymerase and other proteins to DNA during high-speed replication. This is DNA polymerase sliding clamp from Methanococcus vannielii (strain ATCC 35089 / DSM 1224 / JCM 13029 / OCM 148 / SB).